The chain runs to 738 residues: Ent-kaurene synthase-like 1 (738 aa).

Mg(2+)-binding residues include aspartate 487, aspartate 491, asparagine 631, aspartate 632, and glutamate 639. Residues 487–491 (DDFFD) carry the DDXXD motif motif.

This sequence belongs to the terpene synthase family. Mg(2+) serves as cofactor.

It carries out the reaction ent-copalyl diphosphate = ent-kaur-16-ene + diphosphate. The protein operates within secondary metabolite biosynthesis; terpenoid biosynthesis. Its function is as follows. Diterpene cyclase involved in the biosynthesis of labdane-related diterpenoids (LRDs) natural products. Catalyzes the cyclization of ent-CDP into ent-kaurene. The chain is Ent-kaurene synthase-like 1 from Ricinus communis (Castor bean).